The chain runs to 397 residues: LIM/homeobox protein Lhx9 (397 aa).

LIM zinc-binding domains are found at residues 69–130 (ALCA…RFSV) and 131–193 (QRCA…LLQG). 2 disordered regions span residues 248–272 (ENEA…RMRT) and 330–364 (ENGG…TLTD). The segment at residues 267 to 326 (TKRMRTSFKHHQLRTMKSYFAINHNPDAKDLKQLAQKTGLTKRVLQVWFQNARAKFRRNL) is a DNA-binding region (homeobox).

Interacts with LDB1 and LDB2.

The protein localises to the nucleus. In terms of biological role, involved in gonadal development. The protein is LIM/homeobox protein Lhx9 (LHX9) of Bos taurus (Bovine).